Here is a 364-residue protein sequence, read N- to C-terminus: Gap junction delta-4 protein (364 aa).

The Cytoplasmic segment spans residues 1–19; it reads MEKLNLLGFLIITLNCNVT. A helical transmembrane segment spans residues 20–40; sequence IMGMIWLIVEVLLRMLVVVLA. The Extracellular portion of the chain corresponds to 41 to 76; that stretch reads GSPIYEDEQERFICNTLQPGCANVCYDLFSPVSPLR. A helical membrane pass occupies residues 77 to 97; it reads FWLVQSLALLLPSVVFGTYTL. Residues 98–128 lie on the Cytoplasmic side of the membrane; the sequence is HRGAKLAAVGGACRPQVPDLSTAYLVHLLLR. Residues 129–149 form a helical membrane-spanning segment; the sequence is MLLEAGLAFLHYFLFGFSVPA. The Extracellular segment spans residues 150-173; sequence RVSCSHVPCSGAVDCYVSRPTEKS. Residues 174 to 194 traverse the membrane as a helical segment; that stretch reads LLILFFWAVSALSFLLSLADL. The Cytoplasmic segment spans residues 195 to 364; that stretch reads LWILPRRKTL…HLRTKKSEWV (170 aa). Residues 331–340 are compositionally biased toward polar residues; it reads HLARHSSASK. Residues 331-364 form a disordered region; that stretch reads HLARHSSASKPQAPCRLTTSGSAPHLRTKKSEWV.

The protein belongs to the connexin family. Delta-type subfamily. In terms of assembly, a connexon is composed of a hexamer of connexins.

The protein localises to the cell membrane. It is found in the cell junction. It localises to the gap junction. In terms of biological role, one gap junction consists of a cluster of closely packed pairs of transmembrane channels, the connexons, through which materials of low MW diffuse from one cell to a neighboring cell. This chain is Gap junction delta-4 protein (Gjd4), found in Mus musculus (Mouse).